Here is a 291-residue protein sequence, read N- to C-terminus: Energy-coupling factor transporter ATP-binding protein EcfA2 (291 aa).

One can recognise an ABC transporter domain in the interval 3–246 (ITFKDVSYTY…PEWLTSKQLG (244 aa)). 40 to 47 (GHTGSGKS) provides a ligand contact to ATP.

This sequence belongs to the ABC transporter superfamily. Energy-coupling factor EcfA family. Forms a stable energy-coupling factor (ECF) transporter complex composed of 2 membrane-embedded substrate-binding proteins (S component), 2 ATP-binding proteins (A component) and 2 transmembrane proteins (T component).

It localises to the cell membrane. Its function is as follows. ATP-binding (A) component of a common energy-coupling factor (ECF) ABC-transporter complex. Unlike classic ABC transporters this ECF transporter provides the energy necessary to transport a number of different substrates. The sequence is that of Energy-coupling factor transporter ATP-binding protein EcfA2 from Latilactobacillus sakei subsp. sakei (strain 23K) (Lactobacillus sakei subsp. sakei).